We begin with the raw amino-acid sequence, 581 residues long: Arginine--tRNA ligase (581 aa).

A 'HIGH' region motif is present at residues 122 to 132 (PNVAKPMHVGH).

It belongs to the class-I aminoacyl-tRNA synthetase family. In terms of assembly, monomer.

It localises to the cytoplasm. The enzyme catalyses tRNA(Arg) + L-arginine + ATP = L-arginyl-tRNA(Arg) + AMP + diphosphate. The sequence is that of Arginine--tRNA ligase from Francisella tularensis subsp. novicida (strain U112).